The sequence spans 211 residues: MLGKNDPMCLVLVLLGLTALLGICQGGTGCYGSVSRIDTTGASCRTAKPEGLSYCGVRASRTIAERDLGSMNKYKVLIKRVGEALCIEPAVIAGIISRESHAGKILKNGWGDRGNGFGLMQVDKRYHKIEGTWNGEAHIRQGTRILIDMVKKIQRKFPRWTRDQQLKGGISAYNAGVGNVRSYERMDIGTLHDDYSNDVVARAQYFKQHGY.

Positions 1–26 (MLGKNDPMCLVLVLLGLTALLGICQG) are cleaved as a signal peptide. Cystine bridges form between cysteine 30–cysteine 86 and cysteine 44–cysteine 55. Active-site residues include glutamate 99 and aspartate 112.

The protein belongs to the glycosyl hydrolase 23 family. Granulocyte compartment of myelomonocytic cells.

The protein localises to the secreted. It carries out the reaction Hydrolysis of (1-&gt;4)-beta-linkages between N-acetylmuramic acid and N-acetyl-D-glucosamine residues in a peptidoglycan and between N-acetyl-D-glucosamine residues in chitodextrins.. This chain is Lysozyme g, found in Gallus gallus (Chicken).